Consider the following 60-residue polypeptide: Large ribosomal subunit protein bL32 (60 aa).

It belongs to the bacterial ribosomal protein bL32 family.

This Thermosipho melanesiensis (strain DSM 12029 / CIP 104789 / BI429) protein is Large ribosomal subunit protein bL32.